The sequence spans 318 residues: Quinolinate synthase (318 aa).

Iminosuccinate contacts are provided by histidine 34 and serine 51. Cysteine 96 serves as a coordination point for [4Fe-4S] cluster. Residues 122-124 (YIN) and serine 139 contribute to the iminosuccinate site. [4Fe-4S] cluster is bound at residue cysteine 182. Iminosuccinate is bound by residues 208-210 (HPE) and threonine 225. Cysteine 275 contributes to the [4Fe-4S] cluster binding site.

It belongs to the quinolinate synthase family. Type 2 subfamily. [4Fe-4S] cluster is required as a cofactor.

It localises to the cytoplasm. The enzyme catalyses iminosuccinate + dihydroxyacetone phosphate = quinolinate + phosphate + 2 H2O + H(+). Its pathway is cofactor biosynthesis; NAD(+) biosynthesis; quinolinate from iminoaspartate: step 1/1. Catalyzes the condensation of iminoaspartate with dihydroxyacetone phosphate to form quinolinate. This chain is Quinolinate synthase, found in Synechocystis sp. (strain ATCC 27184 / PCC 6803 / Kazusa).